Consider the following 273-residue polypeptide: Putative pyruvate, phosphate dikinase regulatory protein (273 aa).

153–160 (GVSRTSKT) serves as a coordination point for ADP.

Belongs to the pyruvate, phosphate/water dikinase regulatory protein family. PDRP subfamily.

The catalysed reaction is N(tele)-phospho-L-histidyl/L-threonyl-[pyruvate, phosphate dikinase] + ADP = N(tele)-phospho-L-histidyl/O-phospho-L-threonyl-[pyruvate, phosphate dikinase] + AMP + H(+). It catalyses the reaction N(tele)-phospho-L-histidyl/O-phospho-L-threonyl-[pyruvate, phosphate dikinase] + phosphate + H(+) = N(tele)-phospho-L-histidyl/L-threonyl-[pyruvate, phosphate dikinase] + diphosphate. In terms of biological role, bifunctional serine/threonine kinase and phosphorylase involved in the regulation of the pyruvate, phosphate dikinase (PPDK) by catalyzing its phosphorylation/dephosphorylation. In Sinorhizobium fredii (strain NBRC 101917 / NGR234), this protein is Putative pyruvate, phosphate dikinase regulatory protein.